The sequence spans 145 residues: Transcriptional regulator MraZ (145 aa).

SpoVT-AbrB domains follow at residues 5–49 (TYNH…LESE) and 78–121 (TYKI…AKEV).

This sequence belongs to the MraZ family. Forms oligomers.

The protein resides in the cytoplasm. It is found in the nucleoid. The sequence is that of Transcriptional regulator MraZ from Ureaplasma parvum serovar 3 (strain ATCC 27815 / 27 / NCTC 11736).